We begin with the raw amino-acid sequence, 325 residues long: Diacylglycerol acyltransferase/mycolyltransferase Ag85B (325 aa).

The N-terminal stretch at 1–40 (MTDVSGKIRAWGRRLLVGAAAAAALPGLVGLAGGAATAGA) is a signal peptide. 82-83 (LR) serves as a coordination point for substrate. The tract at residues 98–108 (FEWYYQSGLSV) is fibronectin-binding. Cys-127 and Cys-132 form a disulfide bridge. Positions 166 and 194 each coordinate substrate. The active-site Nucleophile is the Ser-166. Residue Glu-270 is part of the active site. Residues 272-275 (FVRS), Lys-279, and 302-304 (HSW) each bind substrate. The active site involves His-302.

It belongs to the mycobacterial A85 antigen family.

The protein localises to the secreted. The enzyme catalyses 2 alpha,alpha'-trehalose 6-mycolate = alpha,alpha'-trehalose 6,6'-bismycolate + alpha,alpha-trehalose. It carries out the reaction an acyl-CoA + a 1,2-diacyl-sn-glycerol = a triacyl-sn-glycerol + CoA. Its function is as follows. The antigen 85 proteins (FbpA, FbpB, FbpC) are responsible for the high affinity of mycobacteria for fibronectin, a large adhesive glycoprotein, which facilitates the attachment of M.tuberculosis to murine alveolar macrophages (AMs). They also help to maintain the integrity of the cell wall by catalyzing the transfer of mycolic acids to cell wall arabinogalactan and through the synthesis of alpha,alpha-trehalose dimycolate (TDM, cord factor). They catalyze the transfer of a mycoloyl residue from one molecule of alpha,alpha-trehalose monomycolate (TMM) to another TMM, leading to the formation of TDM. The chain is Diacylglycerol acyltransferase/mycolyltransferase Ag85B (fbpB) from Mycobacterium kansasii.